A 369-amino-acid polypeptide reads, in one-letter code: Caffeine synthase 1 (369 aa).

Tyr24 serves as a coordination point for S-adenosyl-L-homocysteine. Thr31 provides a ligand contact to caffeine. Residues Cys66, Asn71, Asp103, Leu104, Ser138, and Phe139 each contribute to the S-adenosyl-L-homocysteine site. 3 residues coordinate caffeine: Tyr156, His159, and Trp160. Asn177 provides a ligand contact to Mg(2+). Arg225 is a binding site for caffeine. 3 residues coordinate Mg(2+): Asp263, Phe265, and Asn266. Caffeine is bound at residue Phe321.

Belongs to the methyltransferase superfamily. Type-7 methyltransferase family. Requires Mg(2+) as cofactor.

The enzyme catalyses theobromine + S-adenosyl-L-methionine = caffeine + S-adenosyl-L-homocysteine + H(+). The catalysed reaction is 7-methylxanthine + S-adenosyl-L-methionine = theobromine + S-adenosyl-L-homocysteine + H(+). It participates in alkaloid biosynthesis. Functionally, involved in the biosynthesis of caffeine. Catalyzes the conversion of 7-methylxanthine (7mX) to theobromine and of theobromine to caffeine. The protein is Caffeine synthase 1 of Camellia crassicolumna (Evergreen tea).